The primary structure comprises 401 residues: NADH-quinone oxidoreductase subunit D 2 (401 aa).

It belongs to the complex I 49 kDa subunit family. In terms of assembly, NDH-1 is composed of 14 different subunits. Subunits NuoB, C, D, E, F, and G constitute the peripheral sector of the complex.

The protein resides in the cell inner membrane. It carries out the reaction a quinone + NADH + 5 H(+)(in) = a quinol + NAD(+) + 4 H(+)(out). NDH-1 shuttles electrons from NADH, via FMN and iron-sulfur (Fe-S) centers, to quinones in the respiratory chain. The immediate electron acceptor for the enzyme in this species is believed to be ubiquinone. Couples the redox reaction to proton translocation (for every two electrons transferred, four hydrogen ions are translocated across the cytoplasmic membrane), and thus conserves the redox energy in a proton gradient. The chain is NADH-quinone oxidoreductase subunit D 2 from Thermodesulfovibrio yellowstonii (strain ATCC 51303 / DSM 11347 / YP87).